We begin with the raw amino-acid sequence, 1277 residues long: Clustered mitochondria protein 1 (1277 aa).

Disordered stretches follow at residues L19 to K39 and L148 to K176. The span at H27–Q36 shows a compositional bias: basic residues. The segment covering I153–K176 has biased composition (basic and acidic residues). In terms of domain architecture, Clu spans P339–A596. TPR repeat units follow at residues G704–D738, A1020–V1053, and G1148–Q1181. The disordered stretch occupies residues L1212–K1277. Basic and acidic residues predominate over residues K1235 to D1249. Position 1247 is a phosphoserine (S1247). Residues S1264–K1277 are compositionally biased toward basic residues.

It belongs to the CLU family. May associate with the eukaryotic translation initiation factor 3 (eIF-3) complex. Associates with the 80S ribosome.

Its subcellular location is the cytoplasm. In terms of biological role, mRNA-binding protein involved in proper cytoplasmic distribution of mitochondria. This Saccharomyces cerevisiae (strain ATCC 204508 / S288c) (Baker's yeast) protein is Clustered mitochondria protein 1.